Reading from the N-terminus, the 197-residue chain is MSTLLEQLIEAFRVLPGVGQKSAQRMAYHVLEREREGGRRLAAALGNAVEKVGHCVQCRDFTESEICTICASSSRDRQQLCVVESPADRLAIEHATGYRGLYFILQGRLSPLDGIGPRELGLDRLGERLAAGEVTEMIIATNATVEGEATAHYLAQLARQHAVRPSRLAQGMPLGGELEYVDRGTLSHAFGTRSEVL.

The C4-type zinc-finger motif lies at 55–70 (CVQCRDFTESEICTIC). Residues 78–173 (QQLCVVESPA…RPSRLAQGMP (96 aa)) enclose the Toprim domain.

Belongs to the RecR family.

Functionally, may play a role in DNA repair. It seems to be involved in an RecBC-independent recombinational process of DNA repair. It may act with RecF and RecO. The protein is Recombination protein RecR of Xanthomonas euvesicatoria pv. vesicatoria (strain 85-10) (Xanthomonas campestris pv. vesicatoria).